Here is a 265-residue protein sequence, read N- to C-terminus: NAD kinase 2 (265 aa).

Aspartate 51 serves as the catalytic Proton acceptor. NAD(+) contacts are provided by residues 51 to 52 (DG), 122 to 123 (NE), arginine 149, aspartate 151, 162 to 167 (TAYNKS), and alanine 186.

It belongs to the NAD kinase family. It depends on a divalent metal cation as a cofactor.

Its subcellular location is the cytoplasm. The catalysed reaction is NAD(+) + ATP = ADP + NADP(+) + H(+). Involved in the regulation of the intracellular balance of NAD and NADP, and is a key enzyme in the biosynthesis of NADP. Catalyzes specifically the phosphorylation on 2'-hydroxyl of the adenosine moiety of NAD to yield NADP. The protein is NAD kinase 2 of Bacillus licheniformis (strain ATCC 14580 / DSM 13 / JCM 2505 / CCUG 7422 / NBRC 12200 / NCIMB 9375 / NCTC 10341 / NRRL NRS-1264 / Gibson 46).